Here is a 793-residue protein sequence, read N- to C-terminus: Serine/threonine-protein kinase CLA4 (793 aa).

A disordered region spans residues 8–27; it reads RELSESDFQDIGPAPKPPPV. In terms of domain architecture, PH spans 56-168; that stretch reads QRKKSGWVSY…WLDSIFSKCP (113 aa). Residues 173-186 enclose the CRIB domain; sequence VSSPTNFTHKVHVG. Disordered stretches follow at residues 243 to 369 and 383 to 476; these read AAAQ…ESPT and QKQL…RPTM. Polar residues-rich tracts occupy residues 258-276, 312-337, and 355-369; these read TLSS…STPP, GVTT…QSGP, and LGNS…ESPT. Residues 498-776 enclose the Protein kinase domain; sequence FQMIEKAGQG…TEELLHHSFF (279 aa). Residues 504 to 512 and Lys545 each bind ATP; that span reads AGQGASGSV. The Proton acceptor role is filled by Asp644.

It belongs to the protein kinase superfamily. STE Ser/Thr protein kinase family. STE20 subfamily.

It carries out the reaction L-seryl-[protein] + ATP = O-phospho-L-seryl-[protein] + ADP + H(+). The catalysed reaction is L-threonyl-[protein] + ATP = O-phospho-L-threonyl-[protein] + ADP + H(+). Functionally, required for hyphal maturation and for septation. The protein is Serine/threonine-protein kinase CLA4 (CLA4) of Eremothecium gossypii (strain ATCC 10895 / CBS 109.51 / FGSC 9923 / NRRL Y-1056) (Yeast).